The sequence spans 61 residues: Small ribosomal subunit protein uS14 (61 aa).

4 residues coordinate Zn(2+): C24, C27, C40, and C43.

Belongs to the universal ribosomal protein uS14 family. Zinc-binding uS14 subfamily. Part of the 30S ribosomal subunit. Contacts proteins S3 and S10. Zn(2+) is required as a cofactor.

Its function is as follows. Binds 16S rRNA, required for the assembly of 30S particles and may also be responsible for determining the conformation of the 16S rRNA at the A site. The chain is Small ribosomal subunit protein uS14 from Helicobacter pylori (strain G27).